We begin with the raw amino-acid sequence, 152 residues long: Transcription elongation factor Spt5 (152 aa).

One can recognise a KOW domain in the interval 98–127; that stretch reads EGDLVEVVSGPFRGMQAQVVKVTEGKGEVV.

It belongs to the archaeal Spt5 family. As to quaternary structure, heterodimer composed of Spt4 and Spt5. Interacts with RNA polymerase (RNAP).

In terms of biological role, stimulates transcription elongation. In Acidianus ambivalens (Desulfurolobus ambivalens), this protein is Transcription elongation factor Spt5.